A 247-amino-acid polypeptide reads, in one-letter code: NAD-dependent protein deacetylase (247 aa).

The Deacetylase sirtuin-type domain occupies 1 to 247 (METFKSILHE…EFARSLGMKK (247 aa)). 8 residues coordinate NAD(+): alanine 20, threonine 24, phenylalanine 31, arginine 32, glutamine 100, isoleucine 102, aspartate 103, and histidine 118. Nicotinamide is bound at residue phenylalanine 31. 2 residues coordinate nicotinamide: isoleucine 102 and aspartate 103. Histidine 118 acts as the Proton acceptor in catalysis. Residues cysteine 126, cysteine 129, cysteine 146, and cysteine 156 each coordinate Zn(2+). The NAD(+) site is built by threonine 192, serine 193, asparagine 218, and isoleucine 236.

It belongs to the sirtuin family. Class U subfamily. Zn(2+) is required as a cofactor.

Its subcellular location is the cytoplasm. It catalyses the reaction N(6)-acetyl-L-lysyl-[protein] + NAD(+) + H2O = 2''-O-acetyl-ADP-D-ribose + nicotinamide + L-lysyl-[protein]. Its function is as follows. NAD-dependent protein deacetylase which modulates the activities of several enzymes which are inactive in their acetylated form. This Bacillus subtilis (strain 168) protein is NAD-dependent protein deacetylase.